The following is a 95-amino-acid chain: Aspartyl/glutamyl-tRNA(Asn/Gln) amidotransferase subunit C (95 aa).

This sequence belongs to the GatC family. As to quaternary structure, heterotrimer of A, B and C subunits.

It carries out the reaction L-glutamyl-tRNA(Gln) + L-glutamine + ATP + H2O = L-glutaminyl-tRNA(Gln) + L-glutamate + ADP + phosphate + H(+). The catalysed reaction is L-aspartyl-tRNA(Asn) + L-glutamine + ATP + H2O = L-asparaginyl-tRNA(Asn) + L-glutamate + ADP + phosphate + 2 H(+). Its function is as follows. Allows the formation of correctly charged Asn-tRNA(Asn) or Gln-tRNA(Gln) through the transamidation of misacylated Asp-tRNA(Asn) or Glu-tRNA(Gln) in organisms which lack either or both of asparaginyl-tRNA or glutaminyl-tRNA synthetases. The reaction takes place in the presence of glutamine and ATP through an activated phospho-Asp-tRNA(Asn) or phospho-Glu-tRNA(Gln). This chain is Aspartyl/glutamyl-tRNA(Asn/Gln) amidotransferase subunit C, found in Jannaschia sp. (strain CCS1).